Here is a 529-residue protein sequence, read N- to C-terminus: Peptide chain release factor 3 (529 aa).

Residues 11–280 form the tr-type G domain; that stretch reads SKRRTFAIIS…GLTDWAPAPL (270 aa). Residues 20 to 27, 88 to 92, and 142 to 145 contribute to the GTP site; these read SHPDAGKT, DTPGH, and NKLD.

It belongs to the TRAFAC class translation factor GTPase superfamily. Classic translation factor GTPase family. PrfC subfamily.

The protein localises to the cytoplasm. Functionally, increases the formation of ribosomal termination complexes and stimulates activities of RF-1 and RF-2. It binds guanine nucleotides and has strong preference for UGA stop codons. It may interact directly with the ribosome. The stimulation of RF-1 and RF-2 is significantly reduced by GTP and GDP, but not by GMP. The sequence is that of Peptide chain release factor 3 from Vibrio vulnificus (strain CMCP6).